The following is a 198-amino-acid chain: Probable GTP-binding protein EngB (198 aa).

The EngB-type G domain occupies 22-195; it reads HRNEVAFVGR…IDKLFLEFAT (174 aa). GTP-binding positions include 30 to 37, 57 to 61, 75 to 78, 142 to 145, and 174 to 176; these read GRSNVGKS, GKTRL, DLPG, TKSD, and YSS. Ser-37 and Thr-59 together coordinate Mg(2+).

Belongs to the TRAFAC class TrmE-Era-EngA-EngB-Septin-like GTPase superfamily. EngB GTPase family. Mg(2+) serves as cofactor.

Necessary for normal cell division and for the maintenance of normal septation. This is Probable GTP-binding protein EngB from Clostridium botulinum (strain Eklund 17B / Type B).